A 659-amino-acid chain; its full sequence is UvrABC system protein B (659 aa).

In terms of domain architecture, Helicase ATP-binding spans 25 to 412 (QSIENGNRGQ…SEIVAEQIIR (388 aa)). 38–45 (GVTGSGKT) is a binding site for ATP. Positions 91–114 (YYDYYQPEAYVPQTDTFIEKDASI) match the Beta-hairpin motif. The 154-residue stretch at 429 to 582 (QIDDLYGEIQ…QMEYNEEHNI (154 aa)) folds into the Helicase C-terminal domain. In terms of domain architecture, UVR spans 622–657 (EKLIEQYEEEMKEAAKNLQFERAAELRDIIKDLKEN).

It belongs to the UvrB family. As to quaternary structure, forms a heterotetramer with UvrA during the search for lesions. Interacts with UvrC in an incision complex.

The protein resides in the cytoplasm. Its function is as follows. The UvrABC repair system catalyzes the recognition and processing of DNA lesions. A damage recognition complex composed of 2 UvrA and 2 UvrB subunits scans DNA for abnormalities. Upon binding of the UvrA(2)B(2) complex to a putative damaged site, the DNA wraps around one UvrB monomer. DNA wrap is dependent on ATP binding by UvrB and probably causes local melting of the DNA helix, facilitating insertion of UvrB beta-hairpin between the DNA strands. Then UvrB probes one DNA strand for the presence of a lesion. If a lesion is found the UvrA subunits dissociate and the UvrB-DNA preincision complex is formed. This complex is subsequently bound by UvrC and the second UvrB is released. If no lesion is found, the DNA wraps around the other UvrB subunit that will check the other stand for damage. The protein is UvrABC system protein B of Clostridium perfringens (strain 13 / Type A).